We begin with the raw amino-acid sequence, 700 residues long: Long chain acyl-CoA synthetase 7, peroxisomal (700 aa).

Positions 1 to 29 (MEFASPEQRRLETIRSHIDTSPTNDQSSS) are disordered. Over residues 7 to 18 (EQRRLETIRSHI) the composition is skewed to basic and acidic residues. Residues 10 to 18 (RLETIRSHI) carry the Microbody targeting signal motif. A compositionally biased stretch (polar residues) spans 19-29 (DTSPTNDQSSS). An ATP-binding site is contributed by 266–277 (ICYTSGTTGTPK). The segment at 526-550 (DGWLHTGDIGLWLPGGRLKIIDRKK) is fatty acid-binding. The Microbody targeting signal motif lies at 698–700 (SKL).

This sequence belongs to the ATP-dependent AMP-binding enzyme family. Interacts with PEX5. Mg(2+) serves as cofactor. As to expression, expressed in roots, stems, leaves flowers and germinating seedling. Preferentially expressed in seeds.

The protein resides in the peroxisome. It carries out the reaction a long-chain fatty acid + ATP + CoA = a long-chain fatty acyl-CoA + AMP + diphosphate. The catalysed reaction is decanoate + ATP + CoA = decanoyl-CoA + AMP + diphosphate. It catalyses the reaction dodecanoate + ATP + CoA = dodecanoyl-CoA + AMP + diphosphate. The enzyme catalyses tetradecanoate + ATP + CoA = tetradecanoyl-CoA + AMP + diphosphate. It carries out the reaction hexadecanoate + ATP + CoA = hexadecanoyl-CoA + AMP + diphosphate. The catalysed reaction is (9Z)-octadecenoate + ATP + CoA = (9Z)-octadecenoyl-CoA + AMP + diphosphate. It catalyses the reaction (9Z,12Z)-octadecadienoate + ATP + CoA = (9Z,12Z)-octadecadienoyl-CoA + AMP + diphosphate. The enzyme catalyses (9Z,12Z,15Z)-octadecatrienoate + ATP + CoA = (9Z,12Z,15Z)-octadecatrienoyl-CoA + AMP + diphosphate. The protein operates within lipid metabolism; fatty acid metabolism. In terms of biological role, activation of long-chain fatty acids for both synthesis of cellular lipids, and degradation via beta-oxidation. Preferentially uses palmitate, palmitoleate, oleate, linoleate and eicosenoate as substrates. Can use myristate and linolenate as substrates. Functions redundantly with LACS6 in lipid mobilization for beta-oxidation during seed germination, which is essential for postgerminative growth and seedling establishment. This chain is Long chain acyl-CoA synthetase 7, peroxisomal, found in Arabidopsis thaliana (Mouse-ear cress).